Consider the following 281-residue polypeptide: Protein DOG1-like 1 (281 aa).

The DOG1 domain occupies 9–265 (EKLQQDCYNE…HEWGKSREHR (257 aa)). Residues 262-281 (REHRRLEASGGDSGGNVTRE) are disordered.

This is Protein DOG1-like 1 from Arabidopsis thaliana (Mouse-ear cress).